A 157-amino-acid chain; its full sequence is Transcription antitermination protein NusB (157 aa).

Belongs to the NusB family.

In terms of biological role, involved in transcription antitermination. Required for transcription of ribosomal RNA (rRNA) genes. Binds specifically to the boxA antiterminator sequence of the ribosomal RNA (rrn) operons. The polypeptide is Transcription antitermination protein NusB (Xylella fastidiosa (strain Temecula1 / ATCC 700964)).